A 37-amino-acid chain; its full sequence is M-oxotoxin-Ot2b (37 aa).

In terms of tissue distribution, expressed by the venom gland.

The protein localises to the secreted. In terms of biological role, disrupts biological membranes, particularly those rich in phosphocholine. Has antimicrobial activity against Gram-negative bacterium E.coli, Gram-positive bacteria B.subtilis and S.aureus, and hemolytic activity against sheep, pig and guinea pig red blood cells. Has insecticidal activity against S.frugiperda ovarian cells by opening non-selective ion channels. Enhances the insecticidal activity of spider venom neurotoxic peptides. This is M-oxotoxin-Ot2b from Oxyopes takobius (Lynx spider).